A 555-amino-acid chain; its full sequence is Probable ferredoxin/ferredoxin--NADP reductase (555 aa).

2 4Fe-4S ferredoxin-type domains span residues 2–29 (PYII…PTPD) and 37–66 (EMLY…SDTR). The [4Fe-4S] cluster site is built by Cys-9, Cys-15, Cys-19, Cys-46, Cys-49, Cys-52, and Cys-56. The interval 115–555 (VAIVGSGPAA…APPLRLRALS (441 aa)) is ferredoxin--NADP reductase. FAD contacts are provided by Ala-123, Glu-143, Leu-151, and Ile-187. Residues Arg-213, 258-261 (NGNV), 302-303 (RR), and Glu-314 contribute to the NADP(+) site. Residues Trp-453 and 460–462 (GFI) contribute to the FAD site. Gly-460 is a binding site for NADP(+).

It in the C-terminal section; belongs to the ferredoxin--NADP reductase family. It depends on [4Fe-4S] cluster as a cofactor. FAD serves as cofactor.

The enzyme catalyses 2 reduced [2Fe-2S]-[ferredoxin] + NADP(+) + H(+) = 2 oxidized [2Fe-2S]-[ferredoxin] + NADPH. This chain is Probable ferredoxin/ferredoxin--NADP reductase (fprB), found in Mycobacterium leprae (strain TN).